We begin with the raw amino-acid sequence, 93 residues long: Small ribosomal subunit protein uS19 (93 aa).

The disordered stretch occupies residues 73–93 (EFSPTRTFRGHVKDDRKSKRR). The span at 83-93 (HVKDDRKSKRR) shows a compositional bias: basic and acidic residues.

The protein belongs to the universal ribosomal protein uS19 family.

Functionally, protein S19 forms a complex with S13 that binds strongly to the 16S ribosomal RNA. The protein is Small ribosomal subunit protein uS19 of Streptomyces avermitilis (strain ATCC 31267 / DSM 46492 / JCM 5070 / NBRC 14893 / NCIMB 12804 / NRRL 8165 / MA-4680).